We begin with the raw amino-acid sequence, 377 residues long: MFKTTLCALLITASCSTFAAPQQINDIVHRTITPLIEQQKIPGMAVAVIYQGKPYYFTWGYADIAKKQPVTQQTLFELGSVSKTFTGVLGGDAIARGEIKLSDPTTKYWPELTAKQWNGITLLHLATYTAGGLPLQVPDEVKSSSDLLRFYQNWQPAWAPGTQRLYANSSIGLFGALAVKPSGLSFEQAMQTRVFQPLKLNHTWINVPPAEEKNYAWGYREGKAVHVSPGALDAEAYGVKSTIEDMARWVQSNLKPLDINEKTLQQGIQLAQSRYWQTGDMYQGLGWEMLDWPVNPDSIINGSDNKIALAARPVKAITPPTPAVRASWVHKTGATGGFGSYVAFIPEKELGIVMLANKNYPNPARVDAAWQILNALQ.

Positions 1–19 (MFKTTLCALLITASCSTFA) are cleaved as a signal peptide. Serine 80 (acyl-ester intermediate) is an active-site residue. A beta-lactam is bound by residues serine 80, glutamine 136, tyrosine 166, asparagine 168, alanine 334, and asparagine 359.

Belongs to the class-C beta-lactamase family. As to quaternary structure, monomer.

Its subcellular location is the periplasm. The catalysed reaction is a beta-lactam + H2O = a substituted beta-amino acid. Its activity is regulated as follows. Inhibited by the beta-lactamase-blocking agents avibactam, enmetazobactam, relebactam, nacubactam, vaborbactam, taniborbactam, zidebactam, and beta-lactam-analog boronic acids, via a covalent binding to Ser-80. Inhibited by non-beta-lactam, benzo(b)thiophene-2-boronic acid (BZBTH2B) and various cyclic boronates. Not inhibited by clavulanic acid. Inhibited by O-aryloxycarbonyl hydroxamates, via cross-linking of the active site Ser-80 to Lys-331. Weakly inhibited by citric acid. Class C beta-lactamase which confers resistance to penicillins and cephalosporins. Has benzylpenicillin- and cephaloridine-hydrolyzing activity. Has weak cefuroxime, cefotaxime, cefoxitin and oxacillin-hydrolyzing activities. This Escherichia coli (strain K12) protein is Beta-lactamase.